An 86-amino-acid polypeptide reads, in one-letter code: Diphthamide biosynthesis protein 3 (86 aa).

Positions 4 to 60 (YHDEVEIEDFEYDEEEEMYYYPCPCGDRFQISKEELIEGEEVATCPSCSLVIKVIYD) constitute a DPH-type MB domain. Residues Cys-26, Cys-28, Cys-48, and Cys-51 each contribute to the Fe cation site.

The protein belongs to the DPH3 family. As to quaternary structure, component of the 2-(3-amino-3-carboxypropyl)histidine synthase complex composed of Dph1, Dph2, Dph3 and a NADH-dependent reductase. Fe(2+) is required as a cofactor.

The enzyme catalyses [3Fe-4S](1+)-[protein] + Fe(2+)-[Dph3] = [3Fe-4S](0)-[protein] + Fe(3+)-[Dph3]. It catalyses the reaction 2 [3Fe-4S](0)-[protein] + 2 Fe(2+)-[Dph3] + NADH = 2 [4Fe-4S](1+)-[protein] + 2 [Dph3] + NAD(+) + H(+). Its pathway is protein modification; peptidyl-diphthamide biosynthesis. In terms of biological role, required for the first step of diphthamide biosynthesis, a post-translational modification of histidine which occurs in elongation factor 2. Dph1 and Dph2 transfer a 3-amino-3-carboxypropyl (ACP) group from S-adenosyl-L-methionine (SAM) to a histidine residue, the reaction is assisted by a reduction system comprising Dph3 and a NADH-dependent reductase. Acts as an electron donor to reduce the Fe-S cluster in Dph1-Dph2 keeping the [4Fe-4S] clusters in the active and reduced state. Restores iron to Dph1-Dph2 iron-sulfur clusters which have degraded from [4Fe-4S] to [3Fe-4S] by donating an iron atom to reform [4Fe-4S] clusters, in a manner dependent on the presence of elongation factor 2 and SAM. Associates with the elongator complex and is required for tRNA Wobble base modifications mediated by the elongator complex. The elongator complex is required for multiple tRNA modifications, including mcm5U (5-methoxycarbonylmethyl uridine), mcm5s 2U (5-methoxycarbonylmethyl-2-thiouridine), and ncm5U (5-carbamoylmethyl uridine). The chain is Diphthamide biosynthesis protein 3 from Drosophila melanogaster (Fruit fly).